We begin with the raw amino-acid sequence, 275 residues long: NH(3)-dependent NAD(+) synthetase (275 aa).

G50–S57 is a binding site for ATP. D56 is a Mg(2+) binding site. R147 contacts deamido-NAD(+). An ATP-binding site is contributed by T167. Residue E172 participates in Mg(2+) binding. Deamido-NAD(+) contacts are provided by K180 and D187. 2 residues coordinate ATP: K196 and T218. Deamido-NAD(+) is bound at residue H267–K268.

Belongs to the NAD synthetase family. In terms of assembly, homodimer.

It carries out the reaction deamido-NAD(+) + NH4(+) + ATP = AMP + diphosphate + NAD(+) + H(+). It participates in cofactor biosynthesis; NAD(+) biosynthesis; NAD(+) from deamido-NAD(+) (ammonia route): step 1/1. Catalyzes the ATP-dependent amidation of deamido-NAD to form NAD. Uses ammonia as a nitrogen source. The protein is NH(3)-dependent NAD(+) synthetase of Pseudomonas fluorescens (strain Pf0-1).